Here is a 177-residue protein sequence, read N- to C-terminus: Ribulose bisphosphate carboxylase small subunit, chloroplastic 5 (177 aa).

The transit peptide at 1–56 (MASSMMASTAAVARAGPAQSSMVAPFNGLRSSVAFPATRKANNDLSTLPSNGGRVS) directs the protein to the chloroplast.

Belongs to the RuBisCO small chain family. In terms of assembly, heterohexadecamer of 8 large and 8 small subunits.

Its subcellular location is the plastid. It localises to the chloroplast. In terms of biological role, ruBisCO catalyzes two reactions: the carboxylation of D-ribulose 1,5-bisphosphate, the primary event in carbon dioxide fixation, as well as the oxidative fragmentation of the pentose substrate. Both reactions occur simultaneously and in competition at the same active site. Although the small subunit is not catalytic it is essential for maximal activity. This chain is Ribulose bisphosphate carboxylase small subunit, chloroplastic 5, found in Lemna gibba (Swollen duckweed).